Here is a 208-residue protein sequence, read N- to C-terminus: MAKVSLFKQDGSQAGEVTLNDSVFGIEPNESVVFDVVISQRASLRQGTHAHKNRSAVSGGGKKPWRQKGTGRARQGSTRSPQWRGGGTVFGPNPRSYAYKLPQKVRQLALKSVYSTKVADGKLIAVDTLDFTAPKTAEFAKVISALSIERKVLVVLPNEGNEFAELSARNLANVKVTTANSASVLDIVSADKLLVVQSALTQIEEVLA.

The disordered stretch occupies residues 45-89; sequence RQGTHAHKNRSAVSGGGKKPWRQKGTGRARQGSTRSPQWRGGGTV.

It belongs to the universal ribosomal protein uL4 family. As to quaternary structure, part of the 50S ribosomal subunit.

Its function is as follows. One of the primary rRNA binding proteins, this protein initially binds near the 5'-end of the 23S rRNA. It is important during the early stages of 50S assembly. It makes multiple contacts with different domains of the 23S rRNA in the assembled 50S subunit and ribosome. Functionally, forms part of the polypeptide exit tunnel. The polypeptide is Large ribosomal subunit protein uL4 (Lactococcus lactis subsp. lactis (strain IL1403) (Streptococcus lactis)).